We begin with the raw amino-acid sequence, 277 residues long: Cis-2,3-dihydrobiphenyl-2,3-diol dehydrogenase (277 aa).

Residues 9 to 36 (LITG…AVLD) and D59 each bind NAD(+). S142 is a substrate binding site. Y155 acts as the Proton acceptor in catalysis. Position 159 (K159) interacts with NAD(+).

This sequence belongs to the short-chain dehydrogenases/reductases (SDR) family.

It catalyses the reaction (2R,3S)-3-phenylcyclohexa-3,5-diene-1,2-diol + NAD(+) = biphenyl-2,3-diol + NADH + H(+). It participates in xenobiotic degradation; biphenyl degradation; 2-hydroxy-2,4-pentadienoate and benzoate from biphenyl: step 2/4. This is Cis-2,3-dihydrobiphenyl-2,3-diol dehydrogenase (bphB) from Paraburkholderia xenovorans (strain LB400).